A 193-amino-acid chain; its full sequence is Apoptosis-associated speck-like protein containing a CARD (193 aa).

A Pyrin domain is found at 1 to 91 (MGRARDAILD…AEQLQTTKEE (91 aa)). Residues lysine 55 and lysine 172 each participate in a glycyl lysine isopeptide (Lys-Gly) (interchain with G-Cter in ubiquitin) cross-link. Positions 105 to 193 (STARTGHFVD…PYLVMDLEQS (89 aa)) constitute a CARD domain. Serine 193 carries the post-translational modification Phosphoserine.

Self-associates; enforced oligomerization induces apoptosis, NF-kappa-B regulation and interleukin-1 beta secretion. Homooligomers can form disk-like particles of approximately 12 nm diameter and approximately 1 nm height. Component of several inflammasomes containing one pattern recognition receptor/sensor, such as NLRP2, NLRP3, NLRP6, NLRC4, AIM2, MEFV or NOD2, and probably NLRC4 or NLRP12. Major component of the ASC pyroptosome, a 1-2 um supramolecular assembly (one per macrophage cell) which consists of oligomerized PYCARD dimers and CASP1. Interacts with CASP1 (precursor form); the interaction induces activation of CASP1 leading to the processing of interleukin-1 beta; PYCARD competes with RIPK2 for binding to CASP1. Interacts with NLRP3; the interaction requires the homooligomerization of NLRP3. Interacts with NLRP2, NLRC4, MEFV, CARD16, AIM2, NOD2, RIGI, RIPK2, PYDC1, PYDC2, NLRP10, CHUK, IKBKB and BAX. Interacts with CASP8. Component of the AIM2 PANoptosome complex, a multiprotein complex that drives inflammatory cell death (PANoptosis). Post-translationally, phosphorylated. In terms of processing, 'Lys-63'-linked polyubiquitination by TRAF3 is critical for speck formation and inflammasome activation. 'Lys-63'-linked deubiquitinated by USP50; a crucial step for NLRP3-mediated inflammasome activation. 'Lys-63'-linked polyubiquitination by PELI1 is also critical for speck formation and inflammasome activation. Deubiquitinated by USP3 that cleaves 'Lys-48'-linked ubiquitin chains and strengthens its stability by blocking proteasomal degradation. Expressed in small intestine, colon, thymus, spleen, brain, heart, skeletal muscle, kidney, lung and liver.

The protein resides in the cytoplasm. Its subcellular location is the inflammasome. The protein localises to the endoplasmic reticulum. It localises to the mitochondrion. It is found in the nucleus. Its function is as follows. Functions as a key mediator in apoptosis and inflammation. Promotes caspase-mediated apoptosis involving predominantly caspase-8 and also caspase-9 in a probable cell type-specific manner. Involved in activation of the mitochondrial apoptotic pathway, promotes caspase-8-dependent proteolytic maturation of BID independently of FADD in certain cell types and also mediates mitochondrial translocation of BAX and activates BAX-dependent apoptosis coupled to activation of caspase-9, -2 and -3. Involved in innate immune response by acting as an integral adapter in the assembly of various inflammasomes (NLRP2, NLRP3, NLRP6 and AIM2) which recruit and activate caspase-1 leading to processing and secretion of pro-inflammatory cytokines. Caspase-1-dependent inflammation leads to macrophage pyroptosis, a form of cell death. The function as activating adapter in different types of inflammasomes is mediated by the pyrin and CARD domains and their homotypic interactions. Clustered PYCARD nucleates the formation of caspase-1 filaments through the interaction of their respective CARD domains, acting as a platform for of caspase-1 polymerization. In the NLRC4 inflammasomes seems not be required but facilitates the processing of procaspase-1. In cooperation with NOD2 involved in an inflammasome activated by bacterial muramyl dipeptide leading to caspase-1 activation. May be involved in RIGI-triggered pro-inflammatory responses and inflammasome activation. In collaboration with AIM2 which detects cytosolic double-stranded DNA may also be involved in a caspase-1-independent cell death that involves caspase-8. In adaptive immunity may be involved in maturation of dendritic cells to stimulate T-cell immunity and in cytoskeletal rearrangements coupled to chemotaxis and antigen uptake may be involved in post-transcriptional regulation of the guanine nucleotide exchange factor DOCK2; the latter function is proposed to involve the nuclear form. Also involved in transcriptional activation of cytokines and chemokines independent of the inflammasome; this function may involve AP-1, NF-kappa-B, MAPK and caspase-8 signaling pathways. For regulation of NF-kappa-B activating and inhibiting functions have been reported. Modulates NF-kappa-B induction at the level of the IKK complex by inhibiting kinase activity of CHUK and IKBK. Proposed to compete with RIPK2 for association with CASP1 thereby down-regulating CASP1-mediated RIPK2-dependent NF-kappa-B activation and activating interleukin-1 beta processing. Modulates host resistance to DNA virus infection, probably by inducing the cleavage of and inactivating CGAS in presence of cytoplasmic double-stranded DNA. The sequence is that of Apoptosis-associated speck-like protein containing a CARD (Pycard) from Mus musculus (Mouse).